Reading from the N-terminus, the 242-residue chain is ATP synthase subunit b 2 (242 aa).

Residues 4–24 (LLAISSLTLLASLVLLVVSPA) traverse the membrane as a helical segment. The disordered stretch occupies residues 43 to 74 (ADSEDGDHDHDHEGDDHGHDEAAGDEHGHGDG). The segment covering 49-74 (DHDHDHEGDDHGHDEAAGDEHGHGDG) has biased composition (basic and acidic residues).

Belongs to the ATPase B chain family. In terms of assembly, F-type ATPases have 2 components, F(1) - the catalytic core - and F(0) - the membrane proton channel. F(1) has five subunits: alpha(3), beta(3), gamma(1), delta(1), epsilon(1). F(0) has three main subunits: a(1), b(2) and c(10-14). The alpha and beta chains form an alternating ring which encloses part of the gamma chain. F(1) is attached to F(0) by a central stalk formed by the gamma and epsilon chains, while a peripheral stalk is formed by the delta and b chains.

It is found in the cell inner membrane. In terms of biological role, f(1)F(0) ATP synthase produces ATP from ADP in the presence of a proton or sodium gradient. F-type ATPases consist of two structural domains, F(1) containing the extramembraneous catalytic core and F(0) containing the membrane proton channel, linked together by a central stalk and a peripheral stalk. During catalysis, ATP synthesis in the catalytic domain of F(1) is coupled via a rotary mechanism of the central stalk subunits to proton translocation. Its function is as follows. Component of the F(0) channel, it forms part of the peripheral stalk, linking F(1) to F(0). In Rhodopirellula baltica (strain DSM 10527 / NCIMB 13988 / SH1), this protein is ATP synthase subunit b 2.